Here is a 308-residue protein sequence, read N- to C-terminus: Formamidopyrimidine-DNA glycosylase (308 aa).

Catalysis depends on proline 2, which acts as the Schiff-base intermediate with DNA. Catalysis depends on glutamate 3, which acts as the Proton donor. Lysine 61 (proton donor; for beta-elimination activity) is an active-site residue. DNA is bound by residues histidine 100, arginine 120, and arginine 181. The segment at 267 to 301 (AVYGQEGRPCPRCGALVRRDAFMNRSSFSCPVCQP) adopts an FPG-type zinc-finger fold. Catalysis depends on arginine 291, which acts as the Proton donor; for delta-elimination activity.

It belongs to the FPG family. Monomer. Zn(2+) serves as cofactor.

The catalysed reaction is Hydrolysis of DNA containing ring-opened 7-methylguanine residues, releasing 2,6-diamino-4-hydroxy-5-(N-methyl)formamidopyrimidine.. It carries out the reaction 2'-deoxyribonucleotide-(2'-deoxyribose 5'-phosphate)-2'-deoxyribonucleotide-DNA = a 3'-end 2'-deoxyribonucleotide-(2,3-dehydro-2,3-deoxyribose 5'-phosphate)-DNA + a 5'-end 5'-phospho-2'-deoxyribonucleoside-DNA + H(+). Its function is as follows. Involved in base excision repair of DNA damaged by oxidation or by mutagenic agents. Acts as a DNA glycosylase that recognizes and removes damaged bases. Has a preference for oxidized purines, such as 7,8-dihydro-8-oxoguanine (8-oxoG). Has AP (apurinic/apyrimidinic) lyase activity and introduces nicks in the DNA strand. Cleaves the DNA backbone by beta-delta elimination to generate a single-strand break at the site of the removed base with both 3'- and 5'-phosphates. This chain is Formamidopyrimidine-DNA glycosylase, found in Kineococcus radiotolerans (strain ATCC BAA-149 / DSM 14245 / SRS30216).